Reading from the N-terminus, the 496-residue chain is MSAPVLTTSSGSPIDNNLNSMTAGVNGPILIQDFTLIDKLAHFDRERIPERVVHAKGAGAHGYFEVPSSDVPKWCKAKFLNKVGKRTPIFTRFSTVGGEKGSSDSERDPRGFAVKFYTEEGNFDMVGNNTPVFFIRDPSKFPDFIHTQKRNPQTNCKDPNMFWDFLGQTPESTHQVSILFSDRGTPKSYRHMHGFSSHTLKFVNAQGKPYWVKLHFTSETGIQNYTAEEAAKMSMNDPDSATRDLFETIAKGGEPAWKVSIQLMEFEDALKYRFNPFDVTKIWSHKDYPLIQIGRMVLNRNPENYFAEVEQAAFSPSHMVPGIEPSPDKMLQGRLFSYPDTHRHRLGVNYQQIPVNCPFAVKGGVKNYQRDGFMAVNGNGGKGPNYQPNSFGGPEPHPEFAQHKFDVSGFAARQPYNHPNDDFVQPGDLYRLMSEDAKSRFVSNLVGHMSGVTIKEIQVRAVSNFYKADKDLGARLCKGLGIDVNDVIKFAARSNL.

Residues histidine 54 and asparagine 128 contribute to the active site. Residue tyrosine 338 coordinates heme. The short motif at 494–496 (SNL) is the Microbody targeting signal element.

Belongs to the catalase family. It depends on heme as a cofactor.

Its subcellular location is the peroxisome matrix. The enzyme catalyses 2 H2O2 = O2 + 2 H2O. Catalyzes the degradation of hydrogen peroxide (H(2)O(2)) generated by peroxisomal oxidases to water and oxygen, thereby protecting cells from the toxic effects of hydrogen peroxide. This is Catalase-A (catA) from Dictyostelium discoideum (Social amoeba).